A 376-amino-acid polypeptide reads, in one-letter code: Lipoyl synthase 2, mitochondrial (376 aa).

Residues Cys-109, Cys-114, Cys-120, Cys-140, Cys-144, Cys-147, and Ser-356 each coordinate [4Fe-4S] cluster. In terms of domain architecture, Radical SAM core spans 125-345 (ETGTATATIM…QTLGMEMGFR (221 aa)).

Belongs to the radical SAM superfamily. Lipoyl synthase family. It depends on [4Fe-4S] cluster as a cofactor.

The protein resides in the mitochondrion. The catalysed reaction is [[Fe-S] cluster scaffold protein carrying a second [4Fe-4S](2+) cluster] + N(6)-octanoyl-L-lysyl-[protein] + 2 oxidized [2Fe-2S]-[ferredoxin] + 2 S-adenosyl-L-methionine + 4 H(+) = [[Fe-S] cluster scaffold protein] + N(6)-[(R)-dihydrolipoyl]-L-lysyl-[protein] + 4 Fe(3+) + 2 hydrogen sulfide + 2 5'-deoxyadenosine + 2 L-methionine + 2 reduced [2Fe-2S]-[ferredoxin]. Its pathway is protein modification; protein lipoylation via endogenous pathway; protein N(6)-(lipoyl)lysine from octanoyl-[acyl-carrier-protein]: step 2/2. In terms of biological role, catalyzes the radical-mediated insertion of two sulfur atoms into the C-6 and C-8 positions of the octanoyl moiety bound to the lipoyl domains of lipoate-dependent enzymes, thereby converting the octanoylated domains into lipoylated derivatives. The polypeptide is Lipoyl synthase 2, mitochondrial (Pisum sativum (Garden pea)).